A 174-amino-acid polypeptide reads, in one-letter code: MEKTEEEVEMKELVGLVRILVKRGIDLARRDALSSDPFVVITMGPQKLKSFTVKNNCNPEWNEELTLAIEDPNEPVKLMVYDKDTFTADDKMGDAQIDMKPFLDVHKLGLKELPHGKELKRIVPTRDNCLSEDSIIVSDNGKIVQDMILLLKNVECGKVEIQLEWLKNPGGSGL.

The region spanning 1-115 (MEKTEEEVEM…HKLGLKELPH (115 aa)) is the C2 domain. 7 residues coordinate Ca(2+): Arg-30, Asp-31, Asp-36, Asp-82, Lys-83, Asp-84, and Asp-90.

It belongs to the plant CAR protein family. Binds to PYR/PYL/RCAR abscisic acid intracellular receptors in an ABA-independent manner, both at the plasma membrane and in the nucleus. Subunit of a complex made of CAR6, PHOT1 and RPT3/NPH3. Interacts directly with RPT3/NPH3.

Its subcellular location is the cell membrane. The protein resides in the nucleus. Its function is as follows. Stimulates the GTPase/ATPase activities of Obg-like ATPases. Mediates the transient calcium-dependent interaction of PYR/PYL/RCAR abscisic acid (ABA) receptors with the plasma membrane and thus regulates ABA sensitivity. Prevents hypocotyl bending as well as gravitropic response under blue light conditions. The polypeptide is Protein C2-DOMAIN ABA-RELATED 6 (Arabidopsis thaliana (Mouse-ear cress)).